Reading from the N-terminus, the 254-residue chain is Coproheme decarboxylase (254 aa).

Residues R136, 150–154, H177, Q190, and S228 contribute to the Fe-coproporphyrin III site; that span reads YPMDK. Y150 is an active-site residue.

Belongs to the ChdC family. Type 1 subfamily. Fe-coproporphyrin III serves as cofactor.

The catalysed reaction is Fe-coproporphyrin III + 2 H2O2 + 2 H(+) = heme b + 2 CO2 + 4 H2O. The enzyme catalyses Fe-coproporphyrin III + H2O2 + H(+) = harderoheme III + CO2 + 2 H2O. It catalyses the reaction harderoheme III + H2O2 + H(+) = heme b + CO2 + 2 H2O. The protein operates within porphyrin-containing compound metabolism; protoheme biosynthesis. Its function is as follows. Involved in coproporphyrin-dependent heme b biosynthesis. Catalyzes the decarboxylation of Fe-coproporphyrin III (coproheme) to heme b (protoheme IX), the last step of the pathway. The reaction occurs in a stepwise manner with a three-propionate harderoheme intermediate. This Bacillus subtilis (strain 168) protein is Coproheme decarboxylase.